A 136-amino-acid polypeptide reads, in one-letter code: MNYNPKRTRFRKQHRGRMKGISYRGNTICFGKYALQALEPAWITSRQIEAGRRAMTRNARRGGKIWVRIFPDKPVTVRPAETRMGSGKGSPEYWVAVVKPGRILYEMGGVTENIARRAISIAASKMPIRAQFIISG.

Belongs to the universal ribosomal protein uL16 family. In terms of assembly, part of the 50S ribosomal subunit.

It localises to the plastid. The protein localises to the chloroplast. The protein is Large ribosomal subunit protein uL16c of Guizotia abyssinica (Niger).